Consider the following 565-residue polypeptide: Formate--tetrahydrofolate ligase (565 aa).

65–72 (TPAGEGKT) is a binding site for ATP.

It belongs to the formate--tetrahydrofolate ligase family.

The enzyme catalyses (6S)-5,6,7,8-tetrahydrofolate + formate + ATP = (6R)-10-formyltetrahydrofolate + ADP + phosphate. It participates in one-carbon metabolism; tetrahydrofolate interconversion. The polypeptide is Formate--tetrahydrofolate ligase (Syntrophus aciditrophicus (strain SB)).